The chain runs to 152 residues: SKP1-like protein 8 (152 aa).

The segment at 94 to 152 (TNAANFLNNKSLLHLAGQTVADMIKGNTPKQMREFFNIENDLTPEEEAAIRRENKWAFE) is interaction with the F-box domain of F-box proteins.

It belongs to the SKP1 family. Part of a SCF (SKP1-cullin-F-box) protein ligase complex. As to expression, restricted to siliques.

Its subcellular location is the nucleus. The protein operates within protein modification; protein ubiquitination. Involved in ubiquitination and subsequent proteasomal degradation of target proteins. Together with CUL1, RBX1 and a F-box protein, it forms a SCF E3 ubiquitin ligase complex. The functional specificity of this complex depends on the type of F-box protein. In the SCF complex, it serves as an adapter that links the F-box protein to CUL1. The chain is SKP1-like protein 8 (ASK8) from Arabidopsis thaliana (Mouse-ear cress).